The following is a 129-amino-acid chain: uncharacterized protein (129 aa).

Residues Met33 to Ala50 form a helical membrane-spanning segment.

The protein localises to the membrane. This is an uncharacterized protein from Saccharomyces cerevisiae (strain ATCC 204508 / S288c) (Baker's yeast).